Consider the following 165-residue polypeptide: UPF0262 protein Sala_0765 (165 aa).

The protein belongs to the UPF0262 family.

In Sphingopyxis alaskensis (strain DSM 13593 / LMG 18877 / RB2256) (Sphingomonas alaskensis), this protein is UPF0262 protein Sala_0765.